The primary structure comprises 687 residues: Light-independent protochlorophyllide reductase subunit B (687 aa).

Aspartate 36 contributes to the [4Fe-4S] cluster binding site. Residue aspartate 441 is the Proton donor of the active site. Substrate is bound at residue 576 to 577 (GM).

The protein belongs to the ChlB/BchB/BchZ family. As to quaternary structure, protochlorophyllide reductase is composed of three subunits; ChlL, ChlN and ChlB. Forms a heterotetramer of two ChlB and two ChlN subunits. The cofactor is [4Fe-4S] cluster.

The protein localises to the plastid. Its subcellular location is the chloroplast. It carries out the reaction chlorophyllide a + oxidized 2[4Fe-4S]-[ferredoxin] + 2 ADP + 2 phosphate = protochlorophyllide a + reduced 2[4Fe-4S]-[ferredoxin] + 2 ATP + 2 H2O. It functions in the pathway porphyrin-containing compound metabolism; chlorophyll biosynthesis (light-independent). Component of the dark-operative protochlorophyllide reductase (DPOR) that uses Mg-ATP and reduced ferredoxin to reduce ring D of protochlorophyllide (Pchlide) to form chlorophyllide a (Chlide). This reaction is light-independent. The NB-protein (ChlN-ChlB) is the catalytic component of the complex. The polypeptide is Light-independent protochlorophyllide reductase subunit B (Chlamydomonas reinhardtii (Chlamydomonas smithii)).